A 273-amino-acid chain; its full sequence is Bis(5'-nucleosyl)-tetraphosphatase, symmetrical (273 aa).

Belongs to the Ap4A hydrolase family.

It carries out the reaction P(1),P(4)-bis(5'-adenosyl) tetraphosphate + H2O = 2 ADP + 2 H(+). Hydrolyzes diadenosine 5',5'''-P1,P4-tetraphosphate to yield ADP. This is Bis(5'-nucleosyl)-tetraphosphatase, symmetrical from Aliivibrio salmonicida (strain LFI1238) (Vibrio salmonicida (strain LFI1238)).